We begin with the raw amino-acid sequence, 104 residues long: A-type ATP synthase subunit F (104 aa).

The protein belongs to the V-ATPase F subunit family. In terms of assembly, has multiple subunits with at least A(3), B(3), C, D, E, F, H, I and proteolipid K(x).

The protein resides in the cell membrane. Component of the A-type ATP synthase that produces ATP from ADP in the presence of a proton gradient across the membrane. The sequence is that of A-type ATP synthase subunit F from Thermoplasma acidophilum (strain ATCC 25905 / DSM 1728 / JCM 9062 / NBRC 15155 / AMRC-C165).